The chain runs to 578 residues: Avenacosidase 2 (578 aa).

Residues 1–57 (MALLCSALSNSTHPSFRSHIAGANSENLWHLSAHPAQKSKRRCNLTLSSRAAARISS) constitute a chloroplast transit peptide. Residues Gln89, His193, and 238–239 (NE) contribute to the a beta-D-glucoside site. Glu239 functions as the Proton donor in the catalytic mechanism. Cys258 and Cys264 are disulfide-bonded. Residues Tyr381, Glu454, Trp504, 511–512 (EW), and Phe520 contribute to the a beta-D-glucoside site. Glu454 serves as the catalytic Nucleophile.

Belongs to the glycosyl hydrolase 1 family. In terms of assembly, heteromultimer with P60A in a 1:1 stoichiometry. Aggregates to form the fibrillar stromacentre.

The protein localises to the plastid. It localises to the chloroplast stroma. It catalyses the reaction avenacoside B + H2O = 26-desgluco-avenacoside B + D-glucose. In terms of biological role, beta-glucosidase acting as a preformed defense system. Hydrolyzes the bisdesmosides avenacosides A and B to 26-desgluco-avenacosides exhibiting fungicidal activity. Can use beta-fucoside &gt; beta-glucoside &gt; beta-galactoside &gt; beta-xyloside as substrates, but not alpha-glycosides, beta-thioglucosides and disaccharides. The chain is Avenacosidase 2 (P60B) from Avena sativa (Oat).